A 262-amino-acid chain; its full sequence is Glutamine-binding protein (262 aa).

Positions 1–26 (MKRKTVWKIWITLALIALLSITALAG) are cleaved as a signal peptide. Cys-27 carries N-palmitoyl cysteine lipidation. Residue Cys-27 is the site of S-diacylglycerol cysteine attachment.

It belongs to the bacterial solute-binding protein 3 family.

Its subcellular location is the cell membrane. In terms of biological role, involved in glutamine-transport system. Interacts with the glutamine-transport system GlnPQ. This Geobacillus stearothermophilus (Bacillus stearothermophilus) protein is Glutamine-binding protein (glnH).